We begin with the raw amino-acid sequence, 404 residues long: Phosphoglycerate kinase (404 aa).

Substrate is bound by residues 21 to 23 (DFN), Arg-38, 61 to 64 (HLGR), Arg-126, and Arg-159. Residues Lys-210, Glu-333, and 360–363 (GGDS) each bind ATP.

The protein belongs to the phosphoglycerate kinase family. In terms of assembly, monomer.

The protein localises to the cytoplasm. It catalyses the reaction (2R)-3-phosphoglycerate + ATP = (2R)-3-phospho-glyceroyl phosphate + ADP. Its pathway is carbohydrate degradation; glycolysis; pyruvate from D-glyceraldehyde 3-phosphate: step 2/5. The protein is Phosphoglycerate kinase of Acidobacterium capsulatum (strain ATCC 51196 / DSM 11244 / BCRC 80197 / JCM 7670 / NBRC 15755 / NCIMB 13165 / 161).